A 647-amino-acid chain; its full sequence is DNA mismatch repair protein MutL (647 aa).

The protein belongs to the DNA mismatch repair MutL/HexB family.

This protein is involved in the repair of mismatches in DNA. It is required for dam-dependent methyl-directed DNA mismatch repair. May act as a 'molecular matchmaker', a protein that promotes the formation of a stable complex between two or more DNA-binding proteins in an ATP-dependent manner without itself being part of a final effector complex. This chain is DNA mismatch repair protein MutL, found in Bacillus cereus (strain ATCC 10987 / NRS 248).